The primary structure comprises 489 residues: Acetyl-coenzyme A carboxylase carboxyl transferase subunit beta, chloroplastic (489 aa).

A CoA carboxyltransferase N-terminal domain is found at Leu-222–Lys-489. Residues Cys-226, Cys-229, Cys-245, and Cys-248 each contribute to the Zn(2+) site. The C4-type zinc-finger motif lies at Cys-226–Cys-248.

It belongs to the AccD/PCCB family. In terms of assembly, acetyl-CoA carboxylase is a heterohexamer composed of biotin carboxyl carrier protein, biotin carboxylase and 2 subunits each of ACCase subunit alpha and ACCase plastid-coded subunit beta (accD). Requires Zn(2+) as cofactor.

Its subcellular location is the plastid. The protein localises to the chloroplast stroma. The enzyme catalyses N(6)-carboxybiotinyl-L-lysyl-[protein] + acetyl-CoA = N(6)-biotinyl-L-lysyl-[protein] + malonyl-CoA. The protein operates within lipid metabolism; malonyl-CoA biosynthesis; malonyl-CoA from acetyl-CoA: step 1/1. Its function is as follows. Component of the acetyl coenzyme A carboxylase (ACC) complex. Biotin carboxylase (BC) catalyzes the carboxylation of biotin on its carrier protein (BCCP) and then the CO(2) group is transferred by the transcarboxylase to acetyl-CoA to form malonyl-CoA. The chain is Acetyl-coenzyme A carboxylase carboxyl transferase subunit beta, chloroplastic from Buxus microphylla (Littleleaf boxwood).